A 397-amino-acid polypeptide reads, in one-letter code: Metal tolerance protein 4 (397 aa).

Residues 1–19 show a composition bias toward basic and acidic residues; that stretch reads MEAKGENDARAPLLAERRR. Residues 1 to 27 form a disordered region; it reads MEAKGENDARAPLLAERRRNSVGSMRG. Over 1–104 the chain is Cytoplasmic; that stretch reads MEAKGENDAR…EQKQSEFAMK (104 aa). A helical transmembrane segment spans residues 105 to 122; it reads ISNYANMILLALKIYATI. At 123–126 the chain is on the vacuolar side; that stretch reads KSGS. A helical transmembrane segment spans residues 127–147; that stretch reads IAIAASTLDSLLDLMAGGILW. At 148 to 170 the chain is on the cytoplasmic side; the sequence is FTHLSMKSINVYKYPIGKLRVQP. The helical transmembrane segment at 171 to 191 threads the bilayer; it reads VGIIIFAAVMATLGFQVFVQA. At 192–208 the chain is on the vacuolar side; sequence VEKLIVNETPDKLTPVQ. A helical membrane pass occupies residues 209 to 229; sequence LTWLYSIMIFATVVKLALWLY. The Cytoplasmic segment spans residues 230–248; that stretch reads CRTSGNKIVRAYAKDHYFD. A helical membrane pass occupies residues 249-269; it reads VVTNVVGLAAAVLGDMFYWWI. Aspartate 270 is a topological domain (vacuolar). A helical membrane pass occupies residues 271–291; that stretch reads PVGAIALAVYTITNWSGTVWE. Topologically, residues 292–397 are cytoplasmic; it reads NAVSLVGESA…ILSKLPSSQP (106 aa).

Belongs to the cation diffusion facilitator (CDF) transporter (TC 2.A.4) family. SLC30A subfamily.

It localises to the vacuole membrane. Its function is as follows. Involved in sequestration of excess metal in the cytoplasm into vacuoles to maintain metal homeostasis. This chain is Metal tolerance protein 4 (MTP4), found in Oryza sativa subsp. japonica (Rice).